Reading from the N-terminus, the 255-residue chain is 5-oxoprolinase subunit A (255 aa).

This sequence belongs to the LamB/PxpA family. Forms a complex composed of PxpA, PxpB and PxpC.

The catalysed reaction is 5-oxo-L-proline + ATP + 2 H2O = L-glutamate + ADP + phosphate + H(+). In terms of biological role, catalyzes the cleavage of 5-oxoproline to form L-glutamate coupled to the hydrolysis of ATP to ADP and inorganic phosphate. This chain is 5-oxoprolinase subunit A, found in Pyrococcus furiosus (strain ATCC 43587 / DSM 3638 / JCM 8422 / Vc1).